Consider the following 120-residue polypeptide: Basic phospholipase A2 homolog piratoxin-3 (120 aa).

7 disulfide bridges follow: cysteine 26/cysteine 113, cysteine 28/cysteine 44, cysteine 43/cysteine 94, cysteine 49/cysteine 120, cysteine 50/cysteine 87, cysteine 57/cysteine 81, and cysteine 75/cysteine 85. The tract at residues lysine 104–lysine 115 is important for membrane-damaging activities in eukaryotes and bacteria; heparin-binding.

The protein belongs to the phospholipase A2 family. Group II subfamily. D49 sub-subfamily. In terms of assembly, homodimer; non-covalently linked (probable alternative/compact dimer conformation). Expressed by the venom gland.

It is found in the secreted. In terms of biological role, snake venom phospholipase A2 (PLA2) that lacks enzymatic activity. Shows high myotoxin activities. Also has anticoagulant activity. A model of myotoxic mechanism has been proposed: an apo Lys49-PLA2 is activated by the entrance of a hydrophobic molecule (e.g. fatty acid) at the hydrophobic channel of the protein leading to a reorientation of a monomer. This reorientation causes a transition between 'inactive' to 'active' states, causing alignment of C-terminal and membrane-docking sites (MDoS) side-by-side and putting the membrane-disruption sites (MDiS) in the same plane, exposed to solvent and in a symmetric position for both monomers. The MDoS region stabilizes the toxin on membrane by the interaction of charged residues with phospholipid head groups. Subsequently, the MDiS region destabilizes the membrane with penetration of hydrophobic residues. This insertion causes a disorganization of the membrane, allowing an uncontrolled influx of ions (i.e. calcium and sodium), and eventually triggering irreversible intracellular alterations and cell death. The protein is Basic phospholipase A2 homolog piratoxin-3 of Bothrops pirajai (Piraja's lancehead).